Consider the following 141-residue polypeptide: Decarboxylase CPUR_05434 (141 aa).

Residues 26–121 form the EthD domain; sequence EGMSEEAYRN…MHDHEMFADT (96 aa).

This sequence belongs to the tpcK family.

It catalyses the reaction atrochrysone carboxylate + H(+) = atrochrysone + CO2. Functionally, decarboxylase; part of the ergochrome gene cluster responsible for the typical purple-black color of the ergot sclerotia. The ergochrome gene cluster produces several ergot pigments including the yellow ergochrome secalonic acid and its derivatives, as well as the red anthraquinones endocrocin and clavorubin. The pathway begins with the synthesis of atrochrysone thioester by the polyketide synthase (PKS) CPUR_05437. The atrochrysone carboxyl ACP thioesterase CPUR_05436 then breaks the thioester bond and releases the atrochrysone carboxylic acid from CPUR_05437. The decarboxylase CPUR_05434 then catalyzes the concerted decarboxylation-elimination required to convert atochrysone carboxylic acid into emodin anthrone, which is further oxidized to emodin by the anthrone oxygenase CPUR_05435. Emodin is further modified to yield monodictyphenone via several steps involving CPUR_05427, CPUR_05428, CPUR_05429 and CPUR_05430. The short chain dehydrogenase/reductase CPUR_05418 then catalyzes the C-5 ketoreduction to give the xanthone skeleton of the monomeric units. Ergochromes formation requires further dimerization steps of different xanthone units, probably catalyzed by the cytochrome P450 monooxygenase CPUR_05419. CPUR_05425, CPUR_05426 and CPUR_05431 are unique to Claviceps, thus it is likely that they are involved in further modification of xanthone units or in their dimerization. The yellow ergochromes and the red anthraquinone pigments endocrocin and clavorubin are products from the same PKS derived precursors and the latter are likely shunt products in the pathway of xanthone biosynthesis. It is proposed that atrochrysone carboxylic acid released from the PKS CPUR_05437 can also be converted to endocrocin anthrone which is further oxidized into endocrocin by CPUR_05435. Endocrocin could be then modified to clavorubin, possibly by CPUR_05423 and CPUR_05431. Clavorubin is the principal anthraquinone metabolite produced by the cluster with a much higher yield compared to endocrocin. This Claviceps purpurea (strain 20.1) (Ergot fungus) protein is Decarboxylase CPUR_05434.